Consider the following 206-residue polypeptide: Guanylate kinase (206 aa).

The region spanning 5 to 183 is the Guanylate kinase-like domain; it reads FNLLILSGPS…SKEIILSIAK (179 aa). 12–19 provides a ligand contact to ATP; it reads GPSGAGKS.

This sequence belongs to the guanylate kinase family.

It localises to the cytoplasm. The enzyme catalyses GMP + ATP = GDP + ADP. Its function is as follows. Essential for recycling GMP and indirectly, cGMP. The chain is Guanylate kinase (gmk) from Helicobacter pylori (strain J99 / ATCC 700824) (Campylobacter pylori J99).